Consider the following 636-residue polypeptide: Golgin subfamily A member 8F (636 aa).

2 disordered regions span residues 1-72 and 107-127; these read MAEE…SATL and NKQV…KQKA. The span at 38 to 50 shows a compositional bias: polar residues; sequence TNGSIHETATSGG. Coiled coils occupy residues 93–148, 211–263, and 306–412; these read VSQL…LNTD, LEQS…MSQE, and EVEL…QQKQ. Positions 109–127 are enriched in basic and acidic residues; the sequence is QVEHQLEEEKKANNEKQKA. Disordered regions lie at residues 344-364, 422-449, 496-537, and 588-612; these read LREQ…QEER, ALPG…SIPQ, PITK…GVAA, and PVQG…QDHQ. Residues 429–441 are compositionally biased toward basic and acidic residues; that stretch reads GGGHLDSEGEEAP. The span at 509–522 shows a compositional bias: gly residues; that stretch reads PGGGHHQAGPGQGG.

This sequence belongs to the GOLGA8 family.

The chain is Golgin subfamily A member 8F from Homo sapiens (Human).